The chain runs to 188 residues: Dual specificity protein phosphatase 18 (188 aa).

The Tyrosine-protein phosphatase domain maps to 19 to 160; that stretch reads GLSQITKSLY…LIHYEFQLFG (142 aa). The active-site Phosphocysteine intermediate is the Cys-104.

The protein belongs to the protein-tyrosine phosphatase family. Non-receptor class dual specificity subfamily. As to expression, widely expressed with highest levels in liver, brain, ovary and testis.

It localises to the cytoplasm. Its subcellular location is the nucleus. The protein resides in the mitochondrion inner membrane. The catalysed reaction is O-phospho-L-tyrosyl-[protein] + H2O = L-tyrosyl-[protein] + phosphate. It catalyses the reaction O-phospho-L-seryl-[protein] + H2O = L-seryl-[protein] + phosphate. The enzyme catalyses O-phospho-L-threonyl-[protein] + H2O = L-threonyl-[protein] + phosphate. Its activity is regulated as follows. Activated by manganese ions, inhibited by iodoacetic acid. Can dephosphorylate single and diphosphorylated synthetic MAPK peptides, with preference for the phosphotyrosine and diphosphorylated forms over phosphothreonine. In vitro, dephosphorylates p-nitrophenyl phosphate (pNPP). This chain is Dual specificity protein phosphatase 18 (DUSP18), found in Homo sapiens (Human).